The primary structure comprises 193 residues: Ribosomal RNA small subunit methyltransferase G (193 aa).

S-adenosyl-L-methionine-binding positions include Gly-64, Leu-69, 113–114 (IE), and Arg-126.

The protein belongs to the methyltransferase superfamily. RNA methyltransferase RsmG family.

The protein localises to the cytoplasm. The enzyme catalyses guanosine(527) in 16S rRNA + S-adenosyl-L-methionine = N(7)-methylguanosine(527) in 16S rRNA + S-adenosyl-L-homocysteine. In terms of biological role, specifically methylates the N7 position of guanine in position 527 of 16S rRNA. The protein is Ribosomal RNA small subunit methyltransferase G of Rickettsia massiliae (strain Mtu5).